The following is a 99-amino-acid chain: Apolipoprotein C-III (99 aa).

The first 20 residues, 1–20 (MQPRTLLTVALLALLASARA), serve as a signal peptide directing secretion. Position 63 is a methionine sulfoxide (Met-63). The segment at 68-99 (RFLKGYWSKFTDKFTGFWDSNPEDQPTPAIES) is lipid-binding. An O-linked (GalNAc...) threonine glycan is attached at Thr-94.

Belongs to the apolipoprotein C3 family. Post-translationally, the most abundant glycoforms are characterized by an O-linked disaccharide galactose linked to N-acetylgalactosamine (Gal-GalNAc), further modified with up to 3 sialic acid residues. Less abundant glycoforms are characterized by more complex and fucosylated glycan moieties. O-glycosylated on Thr-94 with a core 1 or possibly core 8 glycan.

Its subcellular location is the secreted. Component of triglyceride-rich very low density lipoproteins (VLDL) and high density lipoproteins (HDL) in plasma. Plays a multifaceted role in triglyceride homeostasis. Intracellularly, promotes hepatic very low density lipoprotein 1 (VLDL1) assembly and secretion; extracellularly, attenuates hydrolysis and clearance of triglyceride-rich lipoproteins (TRLs). Impairs the lipolysis of TRLs by inhibiting lipoprotein lipase and the hepatic uptake of TRLs by remnant receptors. Formed of several curved helices connected via semiflexible hinges, so that it can wrap tightly around the curved micelle surface and easily adapt to the different diameters of its natural binding partners. This chain is Apolipoprotein C-III (Apoc3), found in Mus musculus (Mouse).